We begin with the raw amino-acid sequence, 159 residues long: NADH-quinone oxidoreductase subunit I (159 aa).

4Fe-4S ferredoxin-type domains lie at 50–80 (QRRYPNGEERCIACKLCEAVCPAMAINIESE) and 90–119 (KRYDIDLTKCIFCGFCEEACPTDAIVETHI). Residues Cys60, Cys63, Cys66, Cys70, Cys99, Cys102, Cys105, and Cys109 each contribute to the [4Fe-4S] cluster site.

The protein belongs to the complex I 23 kDa subunit family. NDH-1 is composed of 14 different subunits. Subunits NuoA, H, J, K, L, M, N constitute the membrane sector of the complex. [4Fe-4S] cluster is required as a cofactor.

Its subcellular location is the cell inner membrane. The catalysed reaction is a quinone + NADH + 5 H(+)(in) = a quinol + NAD(+) + 4 H(+)(out). Functionally, NDH-1 shuttles electrons from NADH, via FMN and iron-sulfur (Fe-S) centers, to quinones in the respiratory chain. The immediate electron acceptor for the enzyme in this species is believed to be ubiquinone. Couples the redox reaction to proton translocation (for every two electrons transferred, four hydrogen ions are translocated across the cytoplasmic membrane), and thus conserves the redox energy in a proton gradient. The protein is NADH-quinone oxidoreductase subunit I of Neisseria meningitidis serogroup A / serotype 4A (strain DSM 15465 / Z2491).